The primary structure comprises 427 residues: Glutamate-1-semialdehyde 2,1-aminomutase 1 (427 aa).

Lys265 bears the N6-(pyridoxal phosphate)lysine mark.

The protein belongs to the class-III pyridoxal-phosphate-dependent aminotransferase family. HemL subfamily. As to quaternary structure, homodimer. It depends on pyridoxal 5'-phosphate as a cofactor.

The protein resides in the cytoplasm. The catalysed reaction is (S)-4-amino-5-oxopentanoate = 5-aminolevulinate. The protein operates within porphyrin-containing compound metabolism; protoporphyrin-IX biosynthesis; 5-aminolevulinate from L-glutamyl-tRNA(Glu): step 2/2. The protein is Glutamate-1-semialdehyde 2,1-aminomutase 1 of Lachnoclostridium phytofermentans (strain ATCC 700394 / DSM 18823 / ISDg) (Clostridium phytofermentans).